The following is a 383-amino-acid chain: RNA-binding motif, single-stranded-interacting protein 2 (383 aa).

At Met-1 the chain carries N-acetylmethionine. Residues 28 to 56 form a disordered region; it reads QMAPPSPRNSTPNSSGGGGGGSGGNDQLS. The span at 42 to 51 shows a compositional bias: gly residues; sequence SGGGGGGSGG. RRM domains lie at 58–131 and 137–222; these read TNLY…MAKQ and TNLY…FADG. Ser-108 is subject to Phosphoserine. Residue Ser-287 is modified to Phosphoserine. The interval 352 to 383 is disordered; the sequence is SSVSAEESNGQQNQLAVEPPSDHGVYPFQFSK.

Its subcellular location is the nucleus. The polypeptide is RNA-binding motif, single-stranded-interacting protein 2 (Rbms2) (Mus musculus (Mouse)).